The chain runs to 127 residues: Large ribosomal subunit protein bL20 (127 aa).

Belongs to the bacterial ribosomal protein bL20 family.

In terms of biological role, binds directly to 23S ribosomal RNA and is necessary for the in vitro assembly process of the 50S ribosomal subunit. It is not involved in the protein synthesizing functions of that subunit. This Corynebacterium aurimucosum (strain ATCC 700975 / DSM 44827 / CIP 107346 / CN-1) (Corynebacterium nigricans) protein is Large ribosomal subunit protein bL20.